The chain runs to 326 residues: Glyoxylate/hydroxypyruvate reductase B (326 aa).

Active-site residues include R237 and E266. H285 serves as the catalytic Proton donor.

Belongs to the D-isomer specific 2-hydroxyacid dehydrogenase family. GhrB subfamily. Homodimer.

Its subcellular location is the cytoplasm. The enzyme catalyses glycolate + NADP(+) = glyoxylate + NADPH + H(+). It carries out the reaction (R)-glycerate + NAD(+) = 3-hydroxypyruvate + NADH + H(+). The catalysed reaction is (R)-glycerate + NADP(+) = 3-hydroxypyruvate + NADPH + H(+). Its function is as follows. Catalyzes the NADPH-dependent reduction of glyoxylate and hydroxypyruvate into glycolate and glycerate, respectively. The sequence is that of Glyoxylate/hydroxypyruvate reductase B from Yersinia pseudotuberculosis serotype O:3 (strain YPIII).